Reading from the N-terminus, the 176-residue chain is 2-C-methyl-D-erythritol 2,4-cyclodiphosphate synthase (176 aa).

A divalent metal cation contacts are provided by Asp23, His25, and His60. 23–25 provides a ligand contact to 4-CDP-2-C-methyl-D-erythritol 2-phosphate; it reads DSH. 149-152 lines the 4-CDP-2-C-methyl-D-erythritol 2-phosphate pocket; that stretch reads TSGE.

It belongs to the IspF family. Homotrimer. A divalent metal cation is required as a cofactor.

It carries out the reaction 4-CDP-2-C-methyl-D-erythritol 2-phosphate = 2-C-methyl-D-erythritol 2,4-cyclic diphosphate + CMP. Its pathway is isoprenoid biosynthesis; isopentenyl diphosphate biosynthesis via DXP pathway; isopentenyl diphosphate from 1-deoxy-D-xylulose 5-phosphate: step 4/6. Its function is as follows. Involved in the biosynthesis of isopentenyl diphosphate (IPP) and dimethylallyl diphosphate (DMAPP), two major building blocks of isoprenoid compounds. Catalyzes the conversion of 4-diphosphocytidyl-2-C-methyl-D-erythritol 2-phosphate (CDP-ME2P) to 2-C-methyl-D-erythritol 2,4-cyclodiphosphate (ME-CPP) with a corresponding release of cytidine 5-monophosphate (CMP). The sequence is that of 2-C-methyl-D-erythritol 2,4-cyclodiphosphate synthase from Chlamydia felis (strain Fe/C-56) (Chlamydophila felis).